The following is a 211-amino-acid chain: MCLESKPGNSKTLSLINQGYQILAEYQLVEQEQLRGIYAIPSYSSCLLWFGVIFIHSGCYAESVFRFSILLPDQFPNERTLPTVIFQQDIFHPHICPISHSLDLRCLLKDWVKDEHHIWHILKYIQAIFADPEGSIIGNGVARPLTELNNFKAFHLLSQNRIDYVLRVRNSILWSCKHMFDKPPIKDPHYIVLERYLPHKHLAVMKSSHSQ.

The 161-residue stretch at 17–177 (NQGYQILAEY…VRNSILWSCK (161 aa)) folds into the UBC core domain.

Belongs to the ubiquitin-conjugating enzyme family. FTS subfamily.

The polypeptide is Protein crossbronx-like (Drosophila grimshawi (Hawaiian fruit fly)).